The following is an 87-amino-acid chain: Potassium channel toxin TsTXK-beta/Cryptide TyPep-16 (87 aa).

The signal sequence occupies residues 1 to 19 (MERKLALLLILGMVTLASC). In terms of domain architecture, BetaSPN-type CS-alpha/beta spans 53–87 (QFGCPAYEGYCNDHCNDIERKDGECHGFKCKCAKD). 3 cysteine pairs are disulfide-bonded: C56–C77, C63–C82, and C67–C84.

The protein belongs to the long chain scorpion toxin family. Class 1 subfamily. In terms of tissue distribution, expressed by the venom gland.

It localises to the secreted. Functionally, specifically blocks voltage-gated potassium channels Kv4.2/KCND2. When measured at the peak current, the blocking effect of this toxin is about 65% and shows an IC(50)=652 nM. However, when measured at a later moment of the depolarising test pulse (500 ms), a 100% block of the current is observed with an IC(50)=313 nM. This may indicate a preference of the toxin for binding the inactivated state of the channel. The inhibition is completely reversible. In vivo, intraplantar injection into rat paw induces overt nociception (licking and lifting behaviors) and decreases the mechanical nociceptive threshold (hyperalgesia). Furthermore, the hyperalgesia is prolonged when intrathecal injections are performed. Its function is as follows. Induces discomfort and anxiety in mice, as it moderately diminishes locomotion (but has no effect on rearing behavior). Does not cause hemolysis, mast cell degranulation, LDH release, and does not have antimicrobial activity. Does not cause edema and pain. Does not induce hemolytic activity, lactate dehydrogenase (LDH) release from mast cells, mast cell degranulation, and antimicrobial effects. In vivo, injection into mice causes moderate edema formation, but induces very weak or no change in nociceptive sensibility. It also reduces mice locomotion, suggesting an increase in anxiety, but causes no alteration in rearing (standing on hind limbs). This Tityus serrulatus (Brazilian scorpion) protein is Potassium channel toxin TsTXK-beta/Cryptide TyPep-16.